The chain runs to 441 residues: Ribosomal protein uS12 methylthiotransferase RimO (441 aa).

The MTTase N-terminal domain maps to 8 to 118; the sequence is PKIGFVSLGC…VLEHVHHYVP (111 aa). [4Fe-4S] cluster-binding residues include cysteine 17, cysteine 53, cysteine 82, cysteine 150, cysteine 154, and cysteine 157. Residues 136-373 enclose the Radical SAM core domain; that stretch reads LTPRHYAYLK…MQLQQQISAE (238 aa). The TRAM domain maps to 376–441; sequence QEKVGREILV…DEYDLWGSRV (66 aa).

The protein belongs to the methylthiotransferase family. RimO subfamily. [4Fe-4S] cluster is required as a cofactor.

It is found in the cytoplasm. It catalyses the reaction L-aspartate(89)-[ribosomal protein uS12]-hydrogen + (sulfur carrier)-SH + AH2 + 2 S-adenosyl-L-methionine = 3-methylsulfanyl-L-aspartate(89)-[ribosomal protein uS12]-hydrogen + (sulfur carrier)-H + 5'-deoxyadenosine + L-methionine + A + S-adenosyl-L-homocysteine + 2 H(+). Its function is as follows. Catalyzes the methylthiolation of an aspartic acid residue of ribosomal protein uS12. In Escherichia coli (strain SMS-3-5 / SECEC), this protein is Ribosomal protein uS12 methylthiotransferase RimO.